The following is a 1368-amino-acid chain: Cingulin (1368 aa).

The tract at residues 9–378 (MADQHIPVGQ…KQQRTVQSEF (370 aa)) is interaction with TJP3/ZO3 and myosin. Positions 9–435 (MADQHIPVGQ…EKLPSLQVQP (427 aa)) are head. Positions 41 to 55 (QDSYGVAVRVQGIDG) match the ZIM motif. 5 disordered regions span residues 71-264 (FGVQ…TKPL), 278-312 (GQVRGRTARRSQALKDERKRSQSLDGRKNYHDTAD), 1053-1080 (SRKEIGEAQKQAKEKTAEAERHQFNSSR), 1163-1183 (NRSRDQMEQQRAELNQERSRG), and 1308-1368 (QQEI…TSSC). Polar residues predominate over residues 83-97 (NASNTSPPNYQNYSS). The tract at residues 101 to 294 (GPSRSISSES…ARRSQALKDE (194 aa)) is interaction with F-actin. Composition is skewed to low complexity over residues 116–132 (PYGSRGYRPSSSHYSSA) and 200–211 (SQSSRDSAWSRS). The interval 150–295 (SSLPRPLQAS…RRSQALKDER (146 aa)) is interaction with TJP2/ZO2. The span at 228–256 (SATSQQSTSVSNKTKKNGLSTSSPSNQSN) shows a compositional bias: polar residues. The span at 290–312 (ALKDERKRSQSLDGRKNYHDTAD) shows a compositional bias: basic and acidic residues. The segment at 377–1368 (EFQLKSTPDL…TESNLQTSSC (992 aa)) is interaction with myosin. Residues 436–1330 (GEDTISLGSQ…VMEKESKRKP (895 aa)) are a coiled coil. Over residues 1320–1338 (KVMEKESKRKPIRPAHDDD) the composition is skewed to basic and acidic residues. The segment at 1331–1368 (IRPAHDDDLSSDGEFGGPYDPSSITSLLTESNLQTSSC) is tail. Residues 1352-1368 (SSITSLLTESNLQTSSC) show a composition bias toward polar residues.

It belongs to the cingulin family. As to quaternary structure, parallel homodimer. Interacts with TJP1/ZO1 and TJP2/ZO2 in vivo, and TJP3/ZO3, myosin and OCLN in vitro, possibly directly. Acts as an F-actin bundling protein in vitro. As to expression, localized on the cytoplasmic face of tight junctions of polarized epithelia and some endothelia.

It localises to the cell junction. The protein localises to the tight junction. In terms of biological role, probably plays a role in the formation and regulation of the tight junction (TJ) paracellular permeability barrier, possibly by linking ZO proteins to the actomyosin cytoskeleton. The chain is Cingulin from Xenopus laevis (African clawed frog).